Here is a 344-residue protein sequence, read N- to C-terminus: MVQRSHRSLVLETGGIQDRNSAKPFQVRRLYCTPIFHAFSFPEMVVNTIRLGFPSFYMRRFDESFADKIHEFGITETMAAPAMLLKIIQWTEKHEEKRFKLQGLRTILCAGAALASRLRASFLQLFDSASVRIVQVWGMTEGGWFATFWYPEHDDTGSIGRPLPTCQIRVSEVSRAELPDGRQVGELLVKGPQLLTAYKGHPDATKEALHDGWLRTGDIGYCADGKIYIIDRAKDIIKVNGWTISPAELETVLHQIPGIVDAAALSYGTGTKEHVAMFVVAEGPSLLVADIKHHLLQQVARFKVATCEIHLVDSLPRSPSGKVLRSVLRHQLQAHYDNVDSGTS.

AMP-binding regions lie at residues 2 to 239 (VQRS…IIKV) and 248 to 322 (ELET…PSGK).

It belongs to the ATP-dependent AMP-binding enzyme family.

It participates in secondary metabolite biosynthesis. Acyl-CoA ligase; part of the gene cluster that mediates the biosynthesis of squalestatin S1 (SQS1, also known as zaragozic acid A), a heavily oxidized fungal polyketide that offers potent cholesterol lowering activity by targeting squalene synthase (SS). SQS1 is composed of a 2,8-dioxobicyclic[3.2.1]octane-3,4,5-tricarboxyclic acid core that is connected to two lipophilic polyketide arms. These initial steps feature the priming of an unusual benzoic acid starter unit onto the highly reducing polyketide synthase clz14, followed by oxaloacetate extension and product release to generate a tricarboxylic acid containing product. The phenylalanine ammonia lyase (PAL) clz10 and the acyl-CoA ligase clz12 are involved in transforming phenylalanine into benzoyl-CoA. The citrate synthase-like protein clz17 is involved in connecting the C-alpha-carbons of the hexaketide chain and oxaloacetate to afford the tricarboxylic acid unit. The potential hydrolytic enzymes, clz11 and clz13, are in close proximity to pks2 and may participate in product release. On the other side, the tetraketide arm is synthesized by a the squalestatin tetraketide synthase clz2 and enzymatically esterified to the core in the last biosynthetic step, by the acetyltransferase clz6. The biosynthesis of the tetraketide must involve 3 rounds of chain extension. After the first and second rounds methyl-transfer occurs, and in all rounds of extension the ketoreductase and dehydratase are active. The enoyl reductase and C-MeT of clz2 are not active in the final round of extension. The acetyltransferase clz6 appears to have a broad substrate selectivity for its acyl CoA substrate, allowing the in vitro synthesis of novel squalestatins. The biosynthesis of SQS1 requires several oxidative steps likely performed by oxidoreductases clz3, clz15 and clz16. Finally, in support of the identification of the cluster as being responsible for SQS1 production, the cluster contains a gene encoding a putative squalene synthase (SS) clz20, suggesting a likely mechanism for self-resistance. This Cochliobolus lunatus (Filamentous fungus) protein is Acyl-CoA ligase clz12.